The sequence spans 84 residues: Large ribosomal subunit protein bL28 (84 aa).

It belongs to the bacterial ribosomal protein bL28 family.

The chain is Large ribosomal subunit protein bL28 from Deinococcus geothermalis (strain DSM 11300 / CIP 105573 / AG-3a).